A 98-amino-acid polypeptide reads, in one-letter code: uncharacterized protein (98 aa).

The helical transmembrane segment at 10 to 30 (LYGFFAVTGVLIASFIIGEIV) threads the bilayer.

It localises to the host membrane. This is an uncharacterized protein from Saccharolobus islandicus (Sulfolobus islandicus).